The sequence spans 785 residues: Endonuclease MutS2 (785 aa).

Residue 335-342 coordinates ATP; that stretch reads GPNTGGKT. One can recognise a Smr domain in the interval 710–785; it reads LDLRGERYEN…GSGVTIVELK (76 aa).

This sequence belongs to the DNA mismatch repair MutS family. MutS2 subfamily. In terms of assembly, homodimer. Binds to stalled ribosomes, contacting rRNA.

Functionally, endonuclease that is involved in the suppression of homologous recombination and thus may have a key role in the control of bacterial genetic diversity. Acts as a ribosome collision sensor, splitting the ribosome into its 2 subunits. Detects stalled/collided 70S ribosomes which it binds and splits by an ATP-hydrolysis driven conformational change. Acts upstream of the ribosome quality control system (RQC), a ribosome-associated complex that mediates the extraction of incompletely synthesized nascent chains from stalled ribosomes and their subsequent degradation. Probably generates substrates for RQC. The polypeptide is Endonuclease MutS2 (Bacillus velezensis (strain DSM 23117 / BGSC 10A6 / LMG 26770 / FZB42) (Bacillus amyloliquefaciens subsp. plantarum)).